The sequence spans 296 residues: UDP-N-acetylenolpyruvoylglucosamine reductase (296 aa).

Residues 26-191 (RIGGPANYFK…LSATFRLSRN (166 aa)) form the FAD-binding PCMH-type domain. R170 is an active-site residue. The Proton donor role is filled by C218. E287 is a catalytic residue.

This sequence belongs to the MurB family. The cofactor is FAD.

The protein localises to the cytoplasm. The catalysed reaction is UDP-N-acetyl-alpha-D-muramate + NADP(+) = UDP-N-acetyl-3-O-(1-carboxyvinyl)-alpha-D-glucosamine + NADPH + H(+). The protein operates within cell wall biogenesis; peptidoglycan biosynthesis. Functionally, cell wall formation. The chain is UDP-N-acetylenolpyruvoylglucosamine reductase from Chlamydia abortus (strain DSM 27085 / S26/3) (Chlamydophila abortus).